The following is a 155-amino-acid chain: MKILVDADGCPVKDIILKIAKKYHIKVVMVKNICHELHDDYAEIITVDQGRDVADITLINHTEKGDIVITQDYGVAAMALAKNAHAIHQNGWAYTDENIDELLMKRHMGQEIRRKHKKYTKIPKRTKEDDLQFERFLIHYLDENILKIRGHQDEI.

It belongs to the UPF0178 family.

This Alkaliphilus oremlandii (strain OhILAs) (Clostridium oremlandii (strain OhILAs)) protein is UPF0178 protein Clos_2709.